The following is a 436-amino-acid chain: uncharacterized protein (436 aa).

This is an uncharacterized protein from Diadromus pulchellus (Parasitic wasp).